Reading from the N-terminus, the 205-residue chain is Ephrin-A1 (205 aa).

Residues 1–17 form the signal peptide; it reads MEFLWAPLLGLCCSLAA. Positions 18 to 151 constitute an Ephrin RBD domain; that stretch reads ADRHIVFWNS…KLKVTVNGKI (134 aa). A glycan (N-linked (GlcNAc...) asparagine) is linked at N26. Cystine bridges form between C51-C92 and C80-C140. Residue S182 is the site of GPI-anchor amidated serine attachment. A propeptide spans 183 to 205 (removed in mature form); that stretch reads AAPRLFPLVWAVLLLPLLLLQTQ.

Belongs to the ephrin family. In terms of assembly, monomer. Homodimer. Forms heterodimers with EPHA2. Binds to the receptor tyrosine kinases EPHA2, EPHA3, EPHA4, EPHA5, EPHA6 and EPHA7. Also binds with low affinity to EPHA1. Undergoes proteolysis by a metalloprotease to give rise to a soluble monomeric form. In terms of processing, N-Glycosylation is required for binding to EPHA2 receptor and inducing its internalization.

The protein resides in the cell membrane. It is found in the secreted. Functionally, cell surface GPI-bound ligand for Eph receptors, a family of receptor tyrosine kinases which are crucial for migration, repulsion and adhesion during neuronal, vascular and epithelial development. Binds promiscuously Eph receptors residing on adjacent cells, leading to contact-dependent bidirectional signaling into neighboring cells. Plays an important role in angiogenesis and tumor neovascularization. The recruitment of VAV2, VAV3 and PI3-kinase p85 subunit by phosphorylated EPHA2 is critical for EFNA1-induced RAC1 GTPase activation and vascular endothelial cell migration and assembly. Exerts anti-oncogenic effects in tumor cells through activation and down-regulation of EPHA2. Activates EPHA2 by inducing tyrosine phosphorylation which leads to its internalization and degradation. Acts as a negative regulator in the tumorigenesis of gliomas by down-regulating EPHA2 and FAK. Can evoke collapse of embryonic neuronal growth cone and regulates dendritic spine morphogenesis. This is Ephrin-A1 (Efna1) from Rattus norvegicus (Rat).